Here is a 108-residue protein sequence, read N- to C-terminus: Thaicobrin (108 aa).

In terms of domain architecture, B30.2/SPRY spans 1-108 (SPPGNWQKAD…IWQKGLWWLG (108 aa)).

The protein belongs to the ohanin/vespryn family. As to expression, expressed by the venom gland.

The protein resides in the secreted. Functionally, neurotoxin that produces dose-dependent hypolocomotion and hyperalgesia in mice. May directly act on the central nervous system, as it is 6500-fold more potent when administered intracerebroventricularly than intraperitoneal. The polypeptide is Thaicobrin (Naja kaouthia (Monocled cobra)).